The chain runs to 716 residues: ATP-dependent DNA helicase DinG (716 aa).

The region spanning 17-294 is the Helicase ATP-binding domain; it reads ALQEQIPDFI…TCMEQFRPKT (278 aa). An ATP-binding site is contributed by 54 to 61; that stretch reads APTGVGKT. A [4Fe-4S] cluster-binding site is contributed by Cys120. Positions 131–134 match the DEAH box motif; that stretch reads EPTQ. [4Fe-4S] cluster contacts are provided by Cys194, Cys199, and Cys205. A DEAH box motif is present at residues 248 to 251; sequence DEGH. Positions 517–698 constitute a Helicase C-terminal domain; it reads HIAEMAAFFR…VFPIEQPEVP (182 aa).

Belongs to the helicase family. DinG subfamily. Type 1 sub-subfamily. [4Fe-4S] cluster is required as a cofactor.

The enzyme catalyses Couples ATP hydrolysis with the unwinding of duplex DNA at the replication fork by translocating in the 5'-3' direction. This creates two antiparallel DNA single strands (ssDNA). The leading ssDNA polymer is the template for DNA polymerase III holoenzyme which synthesizes a continuous strand.. It catalyses the reaction ATP + H2O = ADP + phosphate + H(+). Functionally, DNA-dependent ATPase and 5'-3' DNA helicase. Unwinds D-loops, R-loops, forked DNA and G-quadruplex DNA. The protein is ATP-dependent DNA helicase DinG of Escherichia coli O6:H1 (strain CFT073 / ATCC 700928 / UPEC).